The following is a 215-amino-acid chain: Ras-related protein SEC4 (215 aa).

GTP is bound at residue G27–S34. An Effector region motif is present at residues F49 to F57. GTP-binding positions include D75 to Q79 and N133 to D136. Residues S201 and S204 each carry the phosphoserine modification. S-geranylgeranyl cysteine attachment occurs at residues C214 and C215.

It belongs to the small GTPase superfamily. Rab family. In terms of assembly, interacts with the guanyl-nucleotide exchange factor SEC2. Interacts with SRO7, YIF1, YIP3, YIP4 and YIP5.

Its subcellular location is the cytoplasmic vesicle. It is found in the secretory vesicle membrane. It localises to the cell membrane. The protein localises to the cytoplasm. Its function is as follows. Involved in exocytosis. Maybe by regulating the binding and fusion of secretory vesicles with the cell surface. The GTP-bound form of SEC4 may interact with an effector, thereby stimulating its activity and leading to exocytotic fusion. SEC4 may be an upstream activator of the 19.5S SEC8/SEC15 particle. SEC4 probably interacts directly with SEC8; it could serve as the attachment site for the SEC8/SEC15 particle. In Saccharomyces cerevisiae (strain ATCC 204508 / S288c) (Baker's yeast), this protein is Ras-related protein SEC4 (SEC4).